Consider the following 151-residue polypeptide: Calmodulin (151 aa).

EF-hand domains are found at residues 10 to 45, 46 to 81, 83 to 118, and 119 to 151; these read EQIS…LGQN, PTEA…KMKD, DSEE…LGEK, and LTDE…MLSK. The Ca(2+) site is built by aspartate 23, aspartate 25, aspartate 27, serine 29, glutamate 34, aspartate 59, aspartate 61, asparagine 63, threonine 65, glutamate 70, aspartate 96, aspartate 98, asparagine 100, glutamate 107, aspartate 132, aspartate 134, aspartate 136, and glutamate 143.

It belongs to the calmodulin family.

Its function is as follows. Calmodulin mediates the control of a large number of enzymes, ion channels and other proteins by Ca(2+). Among the enzymes to be stimulated by the calmodulin-Ca(2+) complex are a number of protein kinases and phosphatases. This chain is Calmodulin, found in Pneumocystis carinii.